The following is a 318-amino-acid chain: Oxidoreductase swnN (318 aa).

Belongs to the NmrA-type oxidoreductase family. Isoflavone reductase subfamily.

It functions in the pathway mycotoxin biosynthesis. Its function is as follows. Aminotransferase; part of the gene cluster that mediates the biosynthesis of swainsonine (SW), a cytotoxic fungal alkaloid and a potential cancer therapy drug. Swainsonine production occurs via a multibranched pathway and is dispensable for fungal colonization of plants and infection of insect hosts. The first step of swainsonine biosynthesis is the production of the precursor pipecolic acid (PA) via conversion of L-lysine (Lys) to 1-piperideine-6-carboxylate (P6C) by the aminotransferase swnA, the latter being further reduced to PA by the reductase swnR. The PKS-NRPS hybrid synthetase swnK uptakes and condensates PA and malonyl-CoA with and without skipping of the ketoreductase (KR) domain in order to produce 3 intermediates, 1-oxoindolizidine, (1S)-1-hydroxyindolizin, and (1R)-1-hydroxyindolizine; with the transisomer (1S)-1-hydroxyindolizin being predominant. The terminal thioester reductase (TE) domain of swnK is involved in reduction of the thioester bond to release the intermediate aldehydes. The oxidoreductase swnN could contribute to the reduction of 1-oxoindolizidine to (1S)-1-hydroxyindolizin and (1R)-1-hydroxyindolizine, contributing to the major route of SW production. The dioxygenase swnH2 would be responsible for the oxidization of (1R)-1-hydroxyindolizine into (1R,2S)-1,2-dihydroxyindolizine and of (1S)-1-hydroxyindolizin to yield both (1R,2S)-1,2-dihydroxyindolizine and (1S,2S)-1,2-dihydroxyindolizine. The dioxygenase swnH1 then performs the conversion of the 1,2-dihydroxyindolizine epimers to SW. The sequence is that of Oxidoreductase swnN from Arthroderma benhamiae (strain ATCC MYA-4681 / CBS 112371) (Trichophyton mentagrophytes).